The primary structure comprises 360 residues: MKTERVNVNVNNQPYPIYIGENLLQDKSLLQRHVKGRQVMIVSNETIAAFYLDPLKAIYQDFQCDTFILPDGEQYKTLEYWEHILHKLASCNHHRDTTLIALGGGVVGDITGFAAACYQRGVDFIQVPTTLLAQVDASIGGKTAVNHPVGKNLIGAFHQPKAVIIDLNTLNTLPEREFKAGMAEIVKAALIKDEKFFTDLENKMSDLLQRNFIFLQAVIKRAAEIKRDIVNADEKERSGERALLNLGHTFAHAIERLLGYGQWLHGEAVSAGLVLAAQLSHRKNLLDFESLQRICRLLTQISLPIHFPKSINADELLSAMYMDKKVANERLHLILLEDLGHAVVSDQVDDRELKSFLENG.

NAD(+) is bound by residues 71–76 (DGEQYK), 105–109 (GVVGD), 129–130 (TT), Lys142, Lys151, and 169–172 (TLNT). Zn(2+) is bound by residues Glu184, His248, and His265.

The protein belongs to the sugar phosphate cyclases superfamily. Dehydroquinate synthase family. The cofactor is Co(2+). Zn(2+) serves as cofactor. NAD(+) is required as a cofactor.

It is found in the cytoplasm. It catalyses the reaction 7-phospho-2-dehydro-3-deoxy-D-arabino-heptonate = 3-dehydroquinate + phosphate. Its pathway is metabolic intermediate biosynthesis; chorismate biosynthesis; chorismate from D-erythrose 4-phosphate and phosphoenolpyruvate: step 2/7. Functionally, catalyzes the conversion of 3-deoxy-D-arabino-heptulosonate 7-phosphate (DAHP) to dehydroquinate (DHQ). The chain is 3-dehydroquinate synthase from Coxiella burnetii (strain RSA 331 / Henzerling II).